Here is a 144-residue protein sequence, read N- to C-terminus: D-aminoacyl-tRNA deacylase (144 aa).

The short motif at Gly136–Pro137 is the Gly-cisPro motif, important for rejection of L-amino acids element.

It belongs to the DTD family. In terms of assembly, homodimer.

Its subcellular location is the cytoplasm. The catalysed reaction is glycyl-tRNA(Ala) + H2O = tRNA(Ala) + glycine + H(+). The enzyme catalyses a D-aminoacyl-tRNA + H2O = a tRNA + a D-alpha-amino acid + H(+). In terms of biological role, an aminoacyl-tRNA editing enzyme that deacylates mischarged D-aminoacyl-tRNAs. Also deacylates mischarged glycyl-tRNA(Ala), protecting cells against glycine mischarging by AlaRS. Acts via tRNA-based rather than protein-based catalysis; rejects L-amino acids rather than detecting D-amino acids in the active site. By recycling D-aminoacyl-tRNA to D-amino acids and free tRNA molecules, this enzyme counteracts the toxicity associated with the formation of D-aminoacyl-tRNA entities in vivo and helps enforce protein L-homochirality. The sequence is that of D-aminoacyl-tRNA deacylase from Haemophilus influenzae (strain 86-028NP).